Reading from the N-terminus, the 193-residue chain is dTTP/UTP pyrophosphatase (193 aa).

Asp70 acts as the Proton acceptor in catalysis.

Belongs to the Maf family. YhdE subfamily. A divalent metal cation is required as a cofactor.

Its subcellular location is the cytoplasm. The catalysed reaction is dTTP + H2O = dTMP + diphosphate + H(+). The enzyme catalyses UTP + H2O = UMP + diphosphate + H(+). Functionally, nucleoside triphosphate pyrophosphatase that hydrolyzes dTTP and UTP. May have a dual role in cell division arrest and in preventing the incorporation of modified nucleotides into cellular nucleic acids. This Ruminiclostridium cellulolyticum (strain ATCC 35319 / DSM 5812 / JCM 6584 / H10) (Clostridium cellulolyticum) protein is dTTP/UTP pyrophosphatase.